Here is a 671-residue protein sequence, read N- to C-terminus: Putative protein kinase C delta type homolog (671 aa).

A disordered region spans residues 1–136 (MMFTRAQVRK…ITNRRGAIKH (136 aa)). The span at 14–27 (SNSSSQRPRSSGGS) shows a compositional bias: low complexity. Over residues 57–101 (ARRDQYRDRDHYGKHSFELPRQHSKEEAYHRDRESSAGGVDRGER) the composition is skewed to basic and acidic residues. Positions 102 to 116 (SGIGGNGGGVTGGGV) are enriched in gly residues. 2 consecutive Phorbol-ester/DAG-type zinc fingers follow at residues 144-194 (GHRF…LGKC) and 216-266 (PHRF…ANLC). In terms of domain architecture, Protein kinase spans 343-601 (FHFLAVLGKG…AGDIADHIFF (259 aa)). ATP is bound by residues 349 to 357 (LGKGSFGKV) and Lys-372. Asp-467 serves as the catalytic Proton acceptor. Positions 602–671 (RPIDWGLLEK…TYTNPHITLD (70 aa)) constitute an AGC-kinase C-terminal domain.

The protein belongs to the protein kinase superfamily. AGC Ser/Thr protein kinase family. PKC subfamily.

It catalyses the reaction L-seryl-[protein] + ATP = O-phospho-L-seryl-[protein] + ADP + H(+). The enzyme catalyses L-threonyl-[protein] + ATP = O-phospho-L-threonyl-[protein] + ADP + H(+). This is Putative protein kinase C delta type homolog from Drosophila melanogaster (Fruit fly).